Consider the following 226-residue polypeptide: Thymidylate kinase (226 aa).

20-27 is an ATP binding site; it reads GGEGAGKS.

This sequence belongs to the thymidylate kinase family.

The enzyme catalyses dTMP + ATP = dTDP + ADP. Functionally, phosphorylation of dTMP to form dTDP in both de novo and salvage pathways of dTTP synthesis. This is Thymidylate kinase from Bradyrhizobium sp. (strain ORS 278).